The following is a 197-amino-acid chain: 3-isopropylmalate dehydratase small subunit (197 aa).

The protein belongs to the LeuD family. LeuD type 1 subfamily. Heterodimer of LeuC and LeuD.

The enzyme catalyses (2R,3S)-3-isopropylmalate = (2S)-2-isopropylmalate. It functions in the pathway amino-acid biosynthesis; L-leucine biosynthesis; L-leucine from 3-methyl-2-oxobutanoate: step 2/4. In terms of biological role, catalyzes the isomerization between 2-isopropylmalate and 3-isopropylmalate, via the formation of 2-isopropylmaleate. This chain is 3-isopropylmalate dehydratase small subunit, found in Corynebacterium glutamicum (strain R).